The following is a 61-amino-acid chain: Small ribosomal subunit protein uS14 (61 aa).

Zn(2+)-binding residues include C24, C27, C40, and C43.

The protein belongs to the universal ribosomal protein uS14 family. Zinc-binding uS14 subfamily. As to quaternary structure, part of the 30S ribosomal subunit. Contacts proteins S3 and S10. Zn(2+) is required as a cofactor.

Functionally, binds 16S rRNA, required for the assembly of 30S particles and may also be responsible for determining the conformation of the 16S rRNA at the A site. The polypeptide is Small ribosomal subunit protein uS14 (Endomicrobium trichonymphae).